A 192-amino-acid polypeptide reads, in one-letter code: Erythropoietin (192 aa).

A signal peptide spans 1 to 27 (MGVHECPAWLWLLLSLVSLPLGLPVPG). 2 disulfides stabilise this stretch: Cys-34–Cys-187 and Cys-56–Cys-60. An N-linked (GlcNAc...) asparagine glycan is attached at Asn-51. Asn-65 and Asn-110 each carry an N-linked (GlcNAc...) asparagine glycan. An O-linked (GalNAc...) serine glycan is attached at Ser-152.

It belongs to the EPO/TPO family. In terms of tissue distribution, produced by kidney or liver of adult mammals and by liver of fetal or neonatal mammals.

Its subcellular location is the secreted. Its function is as follows. Hormone involved in the regulation of erythrocyte proliferation and differentiation and the maintenance of a physiological level of circulating erythrocyte mass. Binds to EPOR leading to EPOR dimerization and JAK2 activation thereby activating specific downstream effectors, including STAT1 and STAT3. This is Erythropoietin (EPO) from Macaca mulatta (Rhesus macaque).